A 242-amino-acid chain; its full sequence is Small ribosomal subunit protein uS2 (242 aa).

Belongs to the universal ribosomal protein uS2 family.

The polypeptide is Small ribosomal subunit protein uS2 (Shewanella loihica (strain ATCC BAA-1088 / PV-4)).